The sequence spans 589 residues: Probable cytochrome P450 49a1 (589 aa).

Residues 56-90 (TGESSNPKKLNVSQQPVTSVATTRTTASSLPAETT) form a disordered region. The span at 57-71 (GESSNPKKLNVSQQP) shows a compositional bias: polar residues. The segment covering 72-84 (VTSVATTRTTASS) has biased composition (low complexity). C536 is a binding site for heme.

It belongs to the cytochrome P450 family. It depends on heme as a cofactor.

Its subcellular location is the endoplasmic reticulum membrane. It is found in the microsome membrane. May be involved in the metabolism of insect hormones and in the breakdown of synthetic insecticides. This Drosophila melanogaster (Fruit fly) protein is Probable cytochrome P450 49a1 (Cyp49a1).